Consider the following 355-residue polypeptide: Peptide chain release factor 1 (355 aa).

Gln-229 carries the post-translational modification N5-methylglutamine. A disordered region spans residues 280-299; it reads LDRERSAARKGQVGSGDRSE.

It belongs to the prokaryotic/mitochondrial release factor family. In terms of processing, methylated by PrmC. Methylation increases the termination efficiency of RF1.

Its subcellular location is the cytoplasm. Functionally, peptide chain release factor 1 directs the termination of translation in response to the peptide chain termination codons UAG and UAA. This chain is Peptide chain release factor 1, found in Parvibaculum lavamentivorans (strain DS-1 / DSM 13023 / NCIMB 13966).